A 143-amino-acid chain; its full sequence is AP-2 complex subunit sigma (143 aa).

Belongs to the adaptor complexes small subunit family. In terms of assembly, adaptor protein complex 2 (AP-2) is a heterotetramer composed of two large adaptins (alpha-type subunit apl3 and beta-type subunit apl1), a medium chain (mu-type subunit apm4) and a small adaptin (sigma-type subunit aps2).

It localises to the cell membrane. The protein resides in the membrane. It is found in the coated pit. Component of the adaptor complexes which link clathrin to receptors in coated vesicles. Clathrin-associated protein complexes are believed to interact with the cytoplasmic tails of membrane proteins, leading to their selection and concentration. This is AP-2 complex subunit sigma (aps2) from Schizosaccharomyces pombe (strain 972 / ATCC 24843) (Fission yeast).